Here is a 472-residue protein sequence, read N- to C-terminus: Glutamine synthetase (472 aa).

The GS beta-grasp domain maps to 17-101 (YDIKFVLLRF…LRCSIYEPST (85 aa)). In terms of domain architecture, GS catalytic spans 109–472 (PRSIAIRAEN…HPVEFEMYYA (364 aa)). 2 residues coordinate Mg(2+): Glu-134 and Glu-136. An ATP-binding site is contributed by Glu-212. Mg(2+) is bound by residues Glu-217 and Glu-225. Residues 269–270 (NG) and Gly-270 contribute to the L-glutamate site. His-274 provides a ligand contact to Mg(2+). ATP-binding positions include 276 to 278 (NMS) and Ser-278. 3 residues coordinate L-glutamate: Arg-326, Glu-332, and Arg-344. ATP contacts are provided by Arg-344, Arg-349, and Lys-357. Glu-362 contacts Mg(2+). Residue Arg-364 coordinates L-glutamate. An O-AMP-tyrosine modification is found at Tyr-402.

This sequence belongs to the glutamine synthetase family. Oligomer of 12 subunits arranged in the form of two hexameric ring. Requires Mg(2+) as cofactor.

The protein resides in the cytoplasm. It catalyses the reaction L-glutamate + NH4(+) + ATP = L-glutamine + ADP + phosphate + H(+). The activity of this enzyme could be controlled by adenylation under conditions of abundant glutamine. Catalyzes the ATP-dependent biosynthesis of glutamine from glutamate and ammonia. This chain is Glutamine synthetase, found in Pasteurella multocida (strain Pm70).